The following is a 394-amino-acid chain: Probable peptidoglycan glycosyltransferase FtsW (394 aa).

The Cytoplasmic portion of the chain corresponds to 1-26; that stretch reads MNTMRPRHLNQRGKPVSRPISLYDKW. The helical transmembrane segment at 27–47 threads the bilayer; the sequence is LIGAVFGLLIIGLMMVASSSV. The Periplasmic portion of the chain corresponds to 48–57; that stretch reads MISTKYFHQP. Residues 58–78 traverse the membrane as a helical segment; that stretch reads FHFLIRQACYLFVGLLLALIV. Topologically, residues 79 to 88 are cytoplasmic; sequence VRTDSSFWEK. A helical membrane pass occupies residues 89-109; the sequence is ISMPMMIGCVFLLLIVLIPGI. Over 110–118 the chain is Periplasmic; sequence GKSVNGSRR. The helical transmembrane segment at 119–139 threads the bilayer; sequence WLALGPIGVQVSELTKLAMIF. At 140-154 the chain is on the cytoplasmic side; sequence YLSGYLVRQQEAVCE. Residues 155 to 175 traverse the membrane as a helical segment; it reads SIFGFIKPMAILAVVSVLLLL. Over 176-177 the chain is Periplasmic; it reads EP. A helical transmembrane segment spans residues 178–198; sequence DFGATVVISGTVMAMLFLAGV. Residues 199-201 lie on the Cytoplasmic side of the membrane; the sequence is KLR. The chain crosses the membrane as a helical span at residues 202–222; that stretch reads YYFGLMLVVVTALALLAVSSP. The Periplasmic portion of the chain corresponds to 223–278; it reads YRVARLTAFLDPWADQYNSGYQLTQSLIAFGRGGWFGTGLGESIQKLLYLPEAHTD. The helical transmembrane segment at 279–299 threads the bilayer; sequence FLFAVIAEELGLFGILVVITL. Over 300 to 327 the chain is Cytoplasmic; it reads YSILVIRGLNIGYTAYTQERHFASYTAY. A helical membrane pass occupies residues 328–348; sequence GLTIWLALQASINMGVNAGLL. The Periplasmic segment spans residues 349–354; that stretch reads PTKGLT. The helical transmembrane segment at 355-375 threads the bilayer; it reads LPLLSYGGASMVINCIVIALL. Residues 376–394 are Cytoplasmic-facing; sequence LRIDHENRWQSLGLRPLTA.

This sequence belongs to the SEDS family. FtsW subfamily.

It is found in the cell inner membrane. It catalyses the reaction [GlcNAc-(1-&gt;4)-Mur2Ac(oyl-L-Ala-gamma-D-Glu-L-Lys-D-Ala-D-Ala)](n)-di-trans,octa-cis-undecaprenyl diphosphate + beta-D-GlcNAc-(1-&gt;4)-Mur2Ac(oyl-L-Ala-gamma-D-Glu-L-Lys-D-Ala-D-Ala)-di-trans,octa-cis-undecaprenyl diphosphate = [GlcNAc-(1-&gt;4)-Mur2Ac(oyl-L-Ala-gamma-D-Glu-L-Lys-D-Ala-D-Ala)](n+1)-di-trans,octa-cis-undecaprenyl diphosphate + di-trans,octa-cis-undecaprenyl diphosphate + H(+). Its pathway is cell wall biogenesis; peptidoglycan biosynthesis. Its function is as follows. Peptidoglycan polymerase that is essential for cell division. In Legionella pneumophila subsp. pneumophila (strain Philadelphia 1 / ATCC 33152 / DSM 7513), this protein is Probable peptidoglycan glycosyltransferase FtsW.